The following is a 350-amino-acid chain: Salicylate decarboxylase (350 aa).

The protein belongs to the metallo-dependent hydrolases superfamily. In terms of assembly, homotetramer.

It carries out the reaction salicylate + H(+) = phenol + CO2. With respect to regulation, inhibited by AgNO(3), HgCl(2), p-chloromercuribenzoic acid and NiCl(2). In terms of biological role, reversibly catalyzes the regioselective carboxylation of phenol to form salicylic acid. Involved in a pathway for the degradation of salicylate via phenol. Also catalyzes the decarboxylation of beta-resorcylic acid (2,4-dihydroxybenzoic acid) into resorcinol (1,3-dihydroxybenzene), gamma-resorcylic acid (2,6-dihydroxybenzoic acid) into resorcinol, 2,3-dihydroxybenzoic acid into catechol (1,2-dihydroxybenzene), and 4-aminosalicylic acid into 3-aminophenol. The protein is Salicylate decarboxylase of Cutaneotrichosporon moniliiforme (Yeast).